The chain runs to 147 residues: uncharacterized protein (147 aa).

Positions 4 to 120 constitute a CMP/dCMP-type deaminase domain; sequence KWAKRFFQMA…EQTEDFLSRW (117 aa). His67 is a Zn(2+) binding site. Glu69 serves as the catalytic Proton donor. Zn(2+) contacts are provided by Cys92 and Cys95.

This sequence belongs to the cytidine and deoxycytidylate deaminase family. Zn(2+) is required as a cofactor.

This is an uncharacterized protein from Aliivibrio fischeri (Vibrio fischeri).